The sequence spans 282 residues: UDP-N-acetylenolpyruvoylglucosamine reductase (282 aa).

Residues Ile-15–Lys-179 form the FAD-binding PCMH-type domain. Arg-157 is an active-site residue. Residue Ser-207 is the Proton donor of the active site. The active site involves Glu-278.

The protein belongs to the MurB family. The cofactor is FAD.

Its subcellular location is the cytoplasm. The catalysed reaction is UDP-N-acetyl-alpha-D-muramate + NADP(+) = UDP-N-acetyl-3-O-(1-carboxyvinyl)-alpha-D-glucosamine + NADPH + H(+). It functions in the pathway cell wall biogenesis; peptidoglycan biosynthesis. Its function is as follows. Cell wall formation. The polypeptide is UDP-N-acetylenolpyruvoylglucosamine reductase (Francisella tularensis subsp. tularensis (strain SCHU S4 / Schu 4)).